The primary structure comprises 74 residues: Sec-independent protein translocase protein TatA (74 aa).

The chain crosses the membrane as a helical span at residues 1–21 (MGTFSIWHWLIVLLVVVVVFG). The segment at 50-74 (TAPAGQVANQSTADQTIDVQTKPKG) is disordered. The segment covering 56–68 (VANQSTADQTIDV) has biased composition (polar residues).

It belongs to the TatA/E family. As to quaternary structure, the Tat system comprises two distinct complexes: a TatABC complex, containing multiple copies of TatA, TatB and TatC subunits, and a separate TatA complex, containing only TatA subunits. Substrates initially bind to the TatABC complex, which probably triggers association of the separate TatA complex to form the active translocon.

It localises to the cell inner membrane. Functionally, part of the twin-arginine translocation (Tat) system that transports large folded proteins containing a characteristic twin-arginine motif in their signal peptide across membranes. TatA could form the protein-conducting channel of the Tat system. The sequence is that of Sec-independent protein translocase protein TatA from Verminephrobacter eiseniae (strain EF01-2).